Reading from the N-terminus, the 336-residue chain is MNSLIKPEGYKPSLDIRMTEVAIKKTKDYFESELAKELNLTRVSAPLFVRPETGLNDNLNGVERPVAFDVKGIGGDTVEVVHSLAKWKRMALKRYGFAPGEGLYTDMNAIRRDEDMDNLHSVYVDQWDWEQIILKSERTEETLKTIVSKIFSVFKRTENYLSGLYPNLQKYLPEDIFFVTTQELEDMYPELTPKERETALAKEKKAIFIMKIGDTLKSGIKHDGRAPDYDDWALNGDIVFYYPVLDLAYEVSSMGIRVDEDSLVAQLKKAGCEDRKNLKFHKELINKELPYTIGGGIGQSRICMFFLGKAHIGEVQASIWSDDMISECSQHNIQLL.

This sequence belongs to the class-II aminoacyl-tRNA synthetase family. AsnA subfamily.

It localises to the cytoplasm. It carries out the reaction L-aspartate + NH4(+) + ATP = L-asparagine + AMP + diphosphate + H(+). Its pathway is amino-acid biosynthesis; L-asparagine biosynthesis; L-asparagine from L-aspartate (ammonia route): step 1/1. This is Aspartate--ammonia ligase from Ruminiclostridium cellulolyticum (strain ATCC 35319 / DSM 5812 / JCM 6584 / H10) (Clostridium cellulolyticum).